Consider the following 243-residue polypeptide: Probable HTH-type transcriptional regulator GfsR (243 aa).

Residues 154 to 179 (AAVARPDTSGSATGRTGDSSPSLALS) form a disordered region. Polar residues predominate over residues 161–178 (TSGSATGRTGDSSPSLAL). The region spanning 171 to 236 (DSSPSLALSP…QALLRWLGHP (66 aa)) is the HTH luxR-type domain. A DNA-binding region (H-T-H motif) is located at residues 195 to 214 (VREIAVEMRLAEKTVRNYLS).

It functions in the pathway antibiotic biosynthesis. Functionally, probable DNA-binding protein that contributes to the control of expression of the biosynthesis operon of the 16-membered macrolide antibiotics FD-891 and FD-892. Might be a member of a two-component regulatory system; the putative sensor kinase gene is unknown. The chain is Probable HTH-type transcriptional regulator GfsR from Streptomyces halstedii.